Reading from the N-terminus, the 432-residue chain is Luc7-like protein 3 (432 aa).

Met-1 bears the N-acetylmethionine mark. 3 positions are modified to phosphoserine: Ser-3, Ser-110, and Ser-115. Residues Lys-124–Ser-181 are a coiled coil. Lys-231 carries the post-translational modification N6-acetyllysine. A compositionally biased stretch (basic and acidic residues) spans Leu-234 to Arg-287. A disordered region spans residues Leu-234–Asn-432. Over residues Glu-288 to Ser-301 the composition is skewed to basic residues. The segment covering Arg-302–Ser-311 has biased composition (basic and acidic residues). The span at Arg-312–Ser-367 shows a compositional bias: basic residues. Residues Arg-368–Asn-414 show a composition bias toward basic and acidic residues. Ser-420 carries the phosphoserine modification. The span at Glu-421–Asn-432 shows a compositional bias: basic and acidic residues. Lys-424 is covalently cross-linked (Glycyl lysine isopeptide (Lys-Gly) (interchain with G-Cter in SUMO1); alternate). Lys-424 is covalently cross-linked (Glycyl lysine isopeptide (Lys-Gly) (interchain with G-Cter in SUMO2); alternate). Phosphoserine is present on residues Ser-425 and Ser-431.

It belongs to the Luc7 family. In terms of assembly, may interact with SFRS1 and form homodimers. Interacts with JMJD6. Interacts with RBM25. Interacts with RSRC1 (via Arg/Ser-rich domain). Interacts with RRP1B.

It localises to the nucleus speckle. Its function is as follows. Binds cAMP regulatory element DNA sequence. May play a role in RNA splicing. This chain is Luc7-like protein 3 (LUC7L3), found in Bos taurus (Bovine).